Reading from the N-terminus, the 1142-residue chain is DNA-directed RNA polymerase subunit beta N-terminal section (1142 aa).

Belongs to the RNA polymerase beta chain family. In terms of assembly, in plastids the minimal PEP RNA polymerase catalytic core is composed of four subunits: alpha, beta, beta', and beta''. When a (nuclear-encoded) sigma factor is associated with the core the holoenzyme is formed, which can initiate transcription.

The protein resides in the plastid. The protein localises to the chloroplast. It carries out the reaction RNA(n) + a ribonucleoside 5'-triphosphate = RNA(n+1) + diphosphate. DNA-dependent RNA polymerase catalyzes the transcription of DNA into RNA using the four ribonucleoside triphosphates as substrates. This Pleurastrum terricola (Filamentous green alga) protein is DNA-directed RNA polymerase subunit beta N-terminal section (rpoB1).